The sequence spans 585 residues: Protein cereblon (585 aa).

Disordered regions lie at residues 1–109 and 156–195; these read MDEE…DLES and FSQERRRSRTSEETSQEAAEQPVDPPPQQPPRPPIDIGFD. Polar residues predominate over residues 80–95; it reads QDDTASEGSHPSSDMS. The span at 158 to 167 shows a compositional bias: basic and acidic residues; that stretch reads QERRRSRTSE. Over residues 178–189 the composition is skewed to pro residues; it reads VDPPPQQPPRPP. The Lon N-terminal domain maps to 225 to 451; the sequence is HMLIFLHQHI…LIKSTFKDET (227 aa). The 110-residue stretch at 450–559 folds into the CULT domain; sequence ETLFFCRYCN…LAGSSVRIGK (110 aa). Zn(2+) is bound by residues Cys455, Cys458, Cys524, and Cys527.

This sequence belongs to the CRBN family. As to quaternary structure, likely a component of a DCX (DDB1-CUL4-X-box) protein ligase complex. May interact with pic/DDB1. In terms of processing, ubiquitinated. Expressed in the fat body (at protein level).

It is found in the nucleus. It functions in the pathway protein modification; protein ubiquitination. Its function is as follows. Substrate recognition component of a DCX (DDB1-CUL4-X-box) E3 protein ligase complex that mediates the ubiquitination and subsequent proteasomal degradation of target proteins. Has an essential role in mediating growth by negatively regulating insulin signaling. It also has a role in maintaining presynaptic function in the neuromuscular junction synapses of third-instar larvae. The sequence is that of Protein cereblon from Drosophila melanogaster (Fruit fly).